Consider the following 862-residue polypeptide: Taxadiene synthase (862 aa).

Mg(2+)-binding residues include D613, D617, N757, T761, and E765. The DDXXD motif signature appears at 613–617 (DDMAD).

This sequence belongs to the terpene synthase family. Mg(2+) is required as a cofactor.

The catalysed reaction is (2E,6E,10E)-geranylgeranyl diphosphate = taxa-4(5),11(12)-diene + diphosphate. Its pathway is alkaloid biosynthesis; taxol biosynthesis; taxa-4(20),11-dien-5alpha-ol from geranylgeranyl diphosphate: step 1/2. In terms of biological role, catalyzes the cyclization of the ubiquitous isoprenoid intermediate geranylgeranyl diphosphate to taxa-4,11-diene, the parent olefin with a taxane skeleton. The chain is Taxadiene synthase (TDC1) from Taxus baccata (English yew).